Reading from the N-terminus, the 146-residue chain is UPF0260 protein Ssed_2516 (146 aa).

It belongs to the UPF0260 family.

This chain is UPF0260 protein Ssed_2516, found in Shewanella sediminis (strain HAW-EB3).